A 192-amino-acid chain; its full sequence is Ion-translocating oxidoreductase complex subunit A (192 aa).

A run of 6 helical transmembrane segments spans residues 5–25 (LLLL…FLGL), 39–59 (IGMS…SYLV), 65–85 (LPFE…AVVV), 102–122 (ALGI…VALL), 134–154 (AIYG…FSAM), and 171–191 (AIAM…TGLV).

The protein belongs to the NqrDE/RnfAE family. In terms of assembly, the complex is composed of six subunits: RnfA, RnfB, RnfC, RnfD, RnfE and RnfG.

It localises to the cell inner membrane. Functionally, part of a membrane-bound complex that couples electron transfer with translocation of ions across the membrane. This is Ion-translocating oxidoreductase complex subunit A from Shewanella sediminis (strain HAW-EB3).